Here is a 306-residue protein sequence, read N- to C-terminus: Acetaldehyde dehydrogenase (306 aa).

12–15 contacts NAD(+); that stretch reads SGNI. Residue C127 is the Acyl-thioester intermediate of the active site. Residues 158-166 and N277 each bind NAD(+); that span reads SAGPGTRAN.

It belongs to the acetaldehyde dehydrogenase family.

The enzyme catalyses acetaldehyde + NAD(+) + CoA = acetyl-CoA + NADH + H(+). The chain is Acetaldehyde dehydrogenase from Mycolicibacterium gilvum (strain PYR-GCK) (Mycobacterium gilvum (strain PYR-GCK)).